We begin with the raw amino-acid sequence, 393 residues long: Pectate lyase A (393 aa).

The signal sequence occupies residues 1–32; that stretch reads MMNKASGRSFTRSSKYLLATLIAGMMASGVSA. Residues Glu174, Asp176, Asp216, and Asp220 each contribute to the Ca(2+) site. Arg273 is an active-site residue. Residues Cys330 and Cys358 are joined by a disulfide bond.

This sequence belongs to the polysaccharide lyase 1 family. PLADES subfamily. Ca(2+) is required as a cofactor.

The protein localises to the secreted. It catalyses the reaction Eliminative cleavage of (1-&gt;4)-alpha-D-galacturonan to give oligosaccharides with 4-deoxy-alpha-D-galact-4-enuronosyl groups at their non-reducing ends.. The protein operates within glycan metabolism; pectin degradation; 2-dehydro-3-deoxy-D-gluconate from pectin: step 2/5. Functionally, involved in maceration and soft-rotting of plant tissue. This chain is Pectate lyase A (pelA), found in Dickeya chrysanthemi (Pectobacterium chrysanthemi).